Reading from the N-terminus, the 400-residue chain is Probable vacuolar protease A (400 aa).

The N-terminal stretch at 1–18 (MKGSLLLAGATLLGCTSA) is a signal peptide. Positions 19-72 (KLHSLKLKKVSLKEQLEHADIDVQIKSLGQKYMGIRPEQHEQQMFKEQTPIEVE) are cleaved as a propeptide — activation peptide. The Peptidase A1 domain maps to 87–397 (YFSEISIGTP…DLGKGTVGLA (311 aa)). The active site involves D105. An intrachain disulfide couples C118 to C123. N-linked (GlcNAc...) asparagine glycosylation is present at N140. The active site involves D289. C323 and C356 are oxidised to a cystine. The N-linked (GlcNAc...) asparagine glycan is linked to N340.

The protein belongs to the peptidase A1 family.

Its subcellular location is the vacuole lumen. It is found in the secreted. The catalysed reaction is Hydrolysis of proteins with broad specificity for peptide bonds. Cleaves -Leu-Leu-|-Val-Tyr- bond in a synthetic substrate. Does not act on esters of Tyr or Arg.. In terms of biological role, vacuolar aspartic endopeptidase which is probably also secreted and contributes to virulence. This Arthroderma benhamiae (strain ATCC MYA-4681 / CBS 112371) (Trichophyton mentagrophytes) protein is Probable vacuolar protease A (PEP2).